The following is a 180-amino-acid chain: Large ribosomal subunit protein uL6 (180 aa).

This sequence belongs to the universal ribosomal protein uL6 family. Part of the 50S ribosomal subunit.

This protein binds to the 23S rRNA, and is important in its secondary structure. It is located near the subunit interface in the base of the L7/L12 stalk, and near the tRNA binding site of the peptidyltransferase center. The protein is Large ribosomal subunit protein uL6 of Mesoplasma florum (strain ATCC 33453 / NBRC 100688 / NCTC 11704 / L1) (Acholeplasma florum).